The primary structure comprises 314 residues: Homoserine O-acetyltransferase (314 aa).

Cysteine 142 (acyl-thioester intermediate) is an active-site residue. Lysine 163 and serine 192 together coordinate substrate. Residue histidine 235 is the Proton acceptor of the active site. Glutamate 237 is an active-site residue. Arginine 249 is a substrate binding site.

Belongs to the MetA family.

Its subcellular location is the cytoplasm. It catalyses the reaction L-homoserine + acetyl-CoA = O-acetyl-L-homoserine + CoA. The protein operates within amino-acid biosynthesis; L-methionine biosynthesis via de novo pathway; O-acetyl-L-homoserine from L-homoserine: step 1/1. In terms of biological role, transfers an acetyl group from acetyl-CoA to L-homoserine, forming acetyl-L-homoserine. This chain is Homoserine O-acetyltransferase, found in Streptococcus mutans serotype c (strain ATCC 700610 / UA159).